Reading from the N-terminus, the 261-residue chain is 1-(5-phosphoribosyl)-5-[(5-phosphoribosylamino)methylideneamino] imidazole-4-carboxamide isomerase (261 aa).

The active-site Proton acceptor is the Asp8. Asp130 (proton donor) is an active-site residue.

Belongs to the HisA/HisF family.

It localises to the cytoplasm. The enzyme catalyses 1-(5-phospho-beta-D-ribosyl)-5-[(5-phospho-beta-D-ribosylamino)methylideneamino]imidazole-4-carboxamide = 5-[(5-phospho-1-deoxy-D-ribulos-1-ylimino)methylamino]-1-(5-phospho-beta-D-ribosyl)imidazole-4-carboxamide. It functions in the pathway amino-acid biosynthesis; L-histidine biosynthesis; L-histidine from 5-phospho-alpha-D-ribose 1-diphosphate: step 4/9. In Prosthecochloris aestuarii (strain DSM 271 / SK 413), this protein is 1-(5-phosphoribosyl)-5-[(5-phosphoribosylamino)methylideneamino] imidazole-4-carboxamide isomerase.